Consider the following 654-residue polypeptide: Fructose-1,6-bisphosphatase class 3 (654 aa).

Residues 288–307 (NPAFKPKKRPDKHERLTQRE) form a disordered region. Basic and acidic residues predominate over residues 298–307 (DKHERLTQRE).

The protein belongs to the FBPase class 3 family. Mn(2+) is required as a cofactor.

The catalysed reaction is beta-D-fructose 1,6-bisphosphate + H2O = beta-D-fructose 6-phosphate + phosphate. The protein operates within carbohydrate biosynthesis; gluconeogenesis. The chain is Fructose-1,6-bisphosphatase class 3 from Staphylococcus aureus (strain Mu3 / ATCC 700698).